A 309-amino-acid chain; its full sequence is L-arabinose 1-dehydrogenase (NAD(P)(+)) (309 aa).

Residues isoleucine 15 and 37–38 (SR) each bind NADP(+). Residue lysine 91 is the Proton donor of the active site. Aspartate 169 provides a ligand contact to NADP(+).

This sequence belongs to the Gfo/Idh/MocA family. Monomer.

The catalysed reaction is alpha-L-arabinopyanose + NAD(+) = L-arabinono-1,4-lactone + NADH + H(+). The enzyme catalyses alpha-L-arabinopyanose + NADP(+) = L-arabinono-1,4-lactone + NADPH + H(+). It catalyses the reaction D-galactose + NAD(+) = D-galactono-1,4-lactone + NADH + H(+). It carries out the reaction D-galactose + NADP(+) = D-galactono-1,5-lactone + NADPH + H(+). Its pathway is carbohydrate degradation; L-arabinose degradation via L-arabinono-1,4-lactone pathway. Functionally, catalyzes the NAD(P)(+)-dependent conversion of L-arabinose to L-arabino-gamma-lactone. Is involved in a degradation pathway of L-arabinose that allows A.brasilense to grow on L-arabinose as a sole carbon source. Prefers NADP(+) to NAD(+) as electron acceptor. Displays high catalytic efficiency for both L-arabinose and D-galactose in vitro. However, the enzyme appears to be involved in the metabolism of L-arabinose but not D-galactose in vivo. To a lesser extent, is also active on D-talose and D-xylose as substrates in vitro, but not with D-arabinose, D-glucose, D-ribose, L-xylose, L-mannose, L-lyxose, and D-fructose. The chain is L-arabinose 1-dehydrogenase (NAD(P)(+)) (araA) from Azospirillum brasilense.